Reading from the N-terminus, the 372-residue chain is Heat-inducible transcription repressor HrcA (372 aa).

Residues 300-334 (YGRSGAAGEPAGNDPVGEPETESETESQTNDTEPI) are disordered.

It belongs to the HrcA family.

In terms of biological role, negative regulator of class I heat shock genes (grpE-dnaK-dnaJ and groELS operons). Prevents heat-shock induction of these operons. This Bifidobacterium longum (strain DJO10A) protein is Heat-inducible transcription repressor HrcA.